Here is a 77-residue protein sequence, read N- to C-terminus: U8-lycotoxin-Ls1o (77 aa).

Residues 1 to 20 (MKLMIFTGLVLFAIVSLIEA) form the signal peptide. A propeptide spanning residues 21-26 (QAENGK) is cleaved from the precursor.

The protein belongs to the neurotoxin 19 (CSTX) family. 08 (U8-Lctx) subfamily. Contains 4 disulfide bonds. As to expression, expressed by the venom gland.

Its subcellular location is the secreted. This chain is U8-lycotoxin-Ls1o, found in Lycosa singoriensis (Wolf spider).